A 504-amino-acid chain; its full sequence is ATP synthase subunit alpha (504 aa).

169-176 (GDRQTGKT) contacts ATP.

Belongs to the ATPase alpha/beta chains family. F-type ATPases have 2 components, CF(1) - the catalytic core - and CF(0) - the membrane proton channel. CF(1) has five subunits: alpha(3), beta(3), gamma(1), delta(1), epsilon(1). CF(0) has three main subunits: a(1), b(2) and c(9-12). The alpha and beta chains form an alternating ring which encloses part of the gamma chain. CF(1) is attached to CF(0) by a central stalk formed by the gamma and epsilon chains, while a peripheral stalk is formed by the delta and b chains.

It localises to the cell membrane. It carries out the reaction ATP + H2O + 4 H(+)(in) = ADP + phosphate + 5 H(+)(out). Functionally, produces ATP from ADP in the presence of a proton gradient across the membrane. The alpha chain is a regulatory subunit. In Clostridium kluyveri (strain NBRC 12016), this protein is ATP synthase subunit alpha.